Reading from the N-terminus, the 197-residue chain is MAVSPKINRREHILQCLAQMLETSPGQRITTAKLASEVGVSEAALYRHFPSKARMFEGLIEFIEESLLSRINIIMDDEKDTMKRCQLMLQLLLIFAERNPGISRVLNGDALLGENERLRSRISSLFAKIETQLKQILREKTLREGRGFNLDEAILANLLLAFAEGRIAQFVRSEFKLKPTTHFDEQWRFIQHQLLQS.

Residues 7–67 (INRREHILQC…GLIEFIEESL (61 aa)) form the HTH tetR-type domain. Residues 30 to 49 (TTAKLASEVGVSEAALYRHF) constitute a DNA-binding region (H-T-H motif). Positions 110 to 130 (ALLGENERLRSRISSLFAKIE) form a coiled coil.

The protein belongs to the nucleoid occlusion factor SlmA family. Homodimer. Interacts with FtsZ.

It is found in the cytoplasm. It localises to the nucleoid. Required for nucleoid occlusion (NO) phenomenon, which prevents Z-ring formation and cell division over the nucleoid. Acts as a DNA-associated cell division inhibitor that binds simultaneously chromosomal DNA and FtsZ, and disrupts the assembly of FtsZ polymers. SlmA-DNA-binding sequences (SBS) are dispersed on non-Ter regions of the chromosome, preventing FtsZ polymerization at these regions. This is Nucleoid occlusion factor SlmA from Shewanella sp. (strain W3-18-1).